The chain runs to 122 residues: Large ribosomal subunit protein uL14 (122 aa).

The protein belongs to the universal ribosomal protein uL14 family. In terms of assembly, part of the 50S ribosomal subunit. Forms a cluster with proteins L3 and L19. In the 70S ribosome, L14 and L19 interact and together make contacts with the 16S rRNA in bridges B5 and B8.

Functionally, binds to 23S rRNA. Forms part of two intersubunit bridges in the 70S ribosome. This chain is Large ribosomal subunit protein uL14, found in Bdellovibrio bacteriovorus (strain ATCC 15356 / DSM 50701 / NCIMB 9529 / HD100).